The sequence spans 206 residues: MGGKWSKSSVIGWPAVRERMRRAEPAADGVGAASRDLEKHGAITSSNTAANNAACAWLEAQEEEKVGFPVTPQVPLRPMTYKAAVDLSHFLKEKGGLEGLIHSQRRQDILDLWIYHTQGYFPDWQNYTPGPGIRYPLTFGWCYKLVPVEPDKVEEANKGENTSLLHPVSLHGMDDPEREVLEWRFDSRLAFHHVARELHPEYFKNC.

A lipid anchor (N-myristoyl glycine; by host) is attached at glycine 2. A Phosphoserine; by host modification is found at serine 6. The segment at 62 to 65 is acidic; interacts with host PACS1 and PACS2; stabilizes the interaction of NEF/MHC-I with host AP1M1; necessary for MHC-I internalization; sequence EEEK. An SH3-binding; interaction with Src family tyrosine kinases region spans residues 69 to 78; it reads PVTPQVPLRP. A PxxP; stabilizes the interaction of NEF/MHC-I with host AP1M1; necessary for MHC-I internalization motif is present at residues 72 to 75; it reads PQVP. The segment at 108–124 is mediates dimerization, Nef-PTE1 interaction; it reads DILDLWIYHTQGYFPDW. The interval 148–180 is binding to ATP6V1H; sequence VEPDKVEEANKGENTSLLHPVSLHGMDDPEREV. The Dileucine internalization motif; necessary for CD4 internalization signature appears at 164–165; it reads LL. Residues 174–175 carry the Diacidic; necessary for CD4 internalization motif; it reads DD.

It belongs to the lentivirus primate group Nef protein family. In terms of assembly, monomer; cytosolic form. Homodimer; membrane bound form. Interacts with Nef associated p21-activated kinase (PAK2); this interaction activates PAK2. Associates with the Nef-MHC-I-AP1 complex; this complex is required for MHC-I internalization. Interacts (via C-terminus) with host PI3-kinase. Interacts with host PACS1; this interaction seems to be weak. Interacts with host PACS2. Interacts with host LCK and MAPK3; these interactions inhibit the kinase activity of the latter. Interacts with host ATP6V1H; this interaction may play a role in CD4 endocytosis. Associates with the CD4-Nef-AP2 complex; this complex is required for CD4 internalization. Interacts with host AP2 subunit alpha and AP2 subunit sigma2. Interacts with TCR-zeta chain; this interaction up-regulates the Fas ligand (FasL) surface expression. Interacts with host HCK, LYN, and SRC; these interactions activate the Src family kinases. Interacts with MAP3K5; this interaction inhibits the Fas and TNFR-mediated death signals. Interacts with beta-COP and PTE1. Interacts with human RACK1; this increases Nef phosphorylation by PKC. Interacts with TP53; this interaction decreases the half-life of TP53, protecting the infected cell against p53-mediated apoptosis. In terms of processing, the virion-associated Nef proteins are cleaved by the viral protease to release the soluble C-terminal core protein. Nef is probably cleaved concomitantly with viral structural proteins on maturation of virus particles. Myristoylated. Post-translationally, phosphorylated on serine residues, probably by host PKCdelta and theta.

Its subcellular location is the host cell membrane. The protein localises to the virion. It localises to the secreted. It is found in the host Golgi apparatus membrane. Factor of infectivity and pathogenicity, required for optimal virus replication. Alters numerous pathways of T-lymphocyte function and down-regulates immunity surface molecules in order to evade host defense and increase viral infectivity. Alters the functionality of other immunity cells, like dendritic cells, monocytes/macrophages and NK cells. Functionally, in infected CD4(+) T-lymphocytes, down-regulates the surface MHC-I, mature MHC-II, CD4, CD28, CCR5 and CXCR4 molecules. Mediates internalization and degradation of host CD4 through the interaction of with the cytoplasmic tail of CD4, the recruitment of AP-2 (clathrin adapter protein complex 2), internalization through clathrin coated pits, and subsequent transport to endosomes and lysosomes for degradation. Diverts host MHC-I molecules to the trans-Golgi network-associated endosomal compartments by an endocytic pathway to finally target them for degradation. MHC-I down-regulation may involve AP-1 (clathrin adapter protein complex 1) or possibly Src family kinase-ZAP70/Syk-PI3K cascade recruited by PACS2. In consequence infected cells are masked for immune recognition by cytotoxic T-lymphocytes. Decreasing the number of immune receptors also prevents reinfection by more HIV particles (superinfection). Down-regulates host SERINC3 and SERINC5 thereby excluding these proteins from the viral particles. Virion infectivity is drastically higher when SERINC3 or SERINC5 are excluded from the viral envelope, because these host antiviral proteins impair the membrane fusion event necessary for subsequent virion penetration. Its function is as follows. Bypasses host T-cell signaling by inducing a transcriptional program nearly identical to that of anti-CD3 cell activation. Interaction with TCR-zeta chain up-regulates the Fas ligand (FasL). Increasing surface FasL molecules and decreasing surface MHC-I molecules on infected CD4(+) cells send attacking cytotoxic CD8+ T-lymphocytes into apoptosis. In terms of biological role, plays a role in optimizing the host cell environment for viral replication without causing cell death by apoptosis. Protects the infected cells from apoptosis in order to keep them alive until the next virus generation is ready to strike. Inhibits the Fas and TNFR-mediated death signals by blocking MAP3K5/ASK1. Decreases the half-life of TP53, protecting the infected cell against p53-mediated apoptosis. Inhibits the apoptotic signals regulated by the Bcl-2 family proteins through the formation of a Nef/PI3-kinase/PAK2 complex that leads to activation of PAK2 and induces phosphorylation of host BAD. Extracellular Nef protein targets CD4(+) T-lymphocytes for apoptosis by interacting with CXCR4 surface receptors. The protein is Protein Nef of Homo sapiens (Human).